The following is a 37-amino-acid chain: Cytochrome b6-f complex subunit 5 (37 aa).

Residues 5-25 (LPSGIVLGLIPITLAGLFVTA) form a helical membrane-spanning segment.

Belongs to the PetG family. The 4 large subunits of the cytochrome b6-f complex are cytochrome b6, subunit IV (17 kDa polypeptide, PetD), cytochrome f and the Rieske protein, while the 4 small subunits are PetG, PetL, PetM and PetN. The complex functions as a dimer.

It localises to the plastid. It is found in the chloroplast thylakoid membrane. In terms of biological role, component of the cytochrome b6-f complex, which mediates electron transfer between photosystem II (PSII) and photosystem I (PSI), cyclic electron flow around PSI, and state transitions. PetG is required for either the stability or assembly of the cytochrome b6-f complex. This chain is Cytochrome b6-f complex subunit 5, found in Pinus thunbergii (Japanese black pine).